Consider the following 488-residue polypeptide: Ribulose bisphosphate carboxylase large chain (488 aa).

Substrate contacts are provided by asparagine 127 and threonine 177. The active-site Proton acceptor is the lysine 179. Lysine 181 provides a ligand contact to substrate. Mg(2+) is bound by residues lysine 205, aspartate 207, and glutamate 208. The residue at position 205 (lysine 205) is an N6-carboxylysine. Histidine 297 functions as the Proton acceptor in the catalytic mechanism. Substrate is bound by residues arginine 298, histidine 330, and serine 382.

The protein belongs to the RuBisCO large chain family. Type I subfamily. In terms of assembly, heterohexadecamer of 8 large chains and 8 small chains. Mg(2+) serves as cofactor.

It is found in the plastid. It localises to the chloroplast. The catalysed reaction is 2 (2R)-3-phosphoglycerate + 2 H(+) = D-ribulose 1,5-bisphosphate + CO2 + H2O. It catalyses the reaction D-ribulose 1,5-bisphosphate + O2 = 2-phosphoglycolate + (2R)-3-phosphoglycerate + 2 H(+). Its function is as follows. RuBisCO catalyzes two reactions: the carboxylation of D-ribulose 1,5-bisphosphate, the primary event in carbon dioxide fixation, as well as the oxidative fragmentation of the pentose substrate in the photorespiration process. Both reactions occur simultaneously and in competition at the same active site. The polypeptide is Ribulose bisphosphate carboxylase large chain (Emiliania huxleyi (Coccolithophore)).